A 331-amino-acid polypeptide reads, in one-letter code: Ornithine carbamoyltransferase (331 aa).

Carbamoyl phosphate-binding positions include 57–60 (STRT), Gln82, Arg106, and 133–136 (HPTQ). L-ornithine is bound by residues Asn166, Asp230, and 234–235 (SM). Residues 272–273 (CL) and Arg317 each bind carbamoyl phosphate.

It belongs to the aspartate/ornithine carbamoyltransferase superfamily. OTCase family.

The protein resides in the cytoplasm. The catalysed reaction is carbamoyl phosphate + L-ornithine = L-citrulline + phosphate + H(+). It participates in amino-acid degradation; L-arginine degradation via ADI pathway; carbamoyl phosphate from L-arginine: step 2/2. Its function is as follows. Reversibly catalyzes the transfer of the carbamoyl group from carbamoyl phosphate (CP) to the N(epsilon) atom of ornithine (ORN) to produce L-citrulline. In Clostridium perfringens (strain SM101 / Type A), this protein is Ornithine carbamoyltransferase.